Consider the following 272-residue polypeptide: HMP-PP phosphatase (272 aa).

D8 acts as the Nucleophile in catalysis. Mg(2+) contacts are provided by D8, D10, and D212.

The protein belongs to the HAD-like hydrolase superfamily. Cof family. Requires Mg(2+) as cofactor.

It carries out the reaction 4-amino-2-methyl-5-(diphosphooxymethyl)pyrimidine + H2O = 4-amino-2-methyl-5-(phosphooxymethyl)pyrimidine + phosphate + H(+). Its function is as follows. Catalyzes the hydrolysis of 4-amino-2-methyl-5-hydroxymethylpyrimidine pyrophosphate (HMP-PP) to 4-amino-2-methyl-5-hydroxymethylpyrimidine phosphate (HMP-P). The polypeptide is HMP-PP phosphatase (Salmonella agona (strain SL483)).